A 160-amino-acid chain; its full sequence is MSKTSIGLDKVQSAELADKLNELLATYQVFYTNVRGYHWNIKGVNFFALHAKFEEIYTNLVARVDEVAERILTLGYTPNNAYSQYLKISRIKEDIAVSEAQECLSGTLQGLKTLLDQQREILAFANNANDEGTASQMSDYIKEQEKLVWMFQAACQTCHN.

Belongs to the Dps family.

This is an uncharacterized protein from Haemophilus influenzae (strain ATCC 51907 / DSM 11121 / KW20 / Rd).